A 126-amino-acid polypeptide reads, in one-letter code: Probable cystatin-16 (126 aa).

The signal sequence occupies residues 1-20; it reads MFLKATLLLGLAVLGMHVWA. Cys-84 and Cys-94 are disulfide-bonded. N-linked (GlcNAc...) asparagine glycosylation is present at Asn-106.

It belongs to the cystatin family.

It localises to the secreted. The sequence is that of Probable cystatin-16 from Bos taurus (Bovine).